We begin with the raw amino-acid sequence, 147 residues long: Hemoglobin subunit gamma-1 (147 aa).

G2 carries the N-acetylglycine; in form Hb F1 modification. Residues 3-147 (HFTEEDKATI…VASALSSRYH (145 aa)) enclose the Globin domain. The residue at position 13 (T13) is a Phosphothreonine. 3 positions are modified to phosphoserine: S45, S51, and S53. K60 is subject to N6-acetyllysine. H64 provides a ligand contact to heme b. K83 carries the N6-acetyllysine modification. H93 is a binding site for heme b. The residue at position 94 (C94) is an S-nitrosocysteine. S140 carries the post-translational modification Phosphoserine.

The protein belongs to the globin family. Heterotetramer of two alpha chains and two gamma chains in fetal hemoglobin (Hb F). In the case of deletions affecting one or more of the alpha chains, the excess gamma chains form homotetramers that exhibit neither Bohr effect nor heme-heme cooperativity (hemoglobin Bart's). In terms of processing, acetylation of Gly-2 converts Hb F to the minor Hb F1. As to expression, red blood cells.

Its function is as follows. Gamma chains make up the fetal hemoglobin F, in combination with alpha chains. The protein is Hemoglobin subunit gamma-1 (HBG1) of Homo sapiens (Human).